A 336-amino-acid polypeptide reads, in one-letter code: tRNA(Ile)-lysidine synthase (336 aa).

ATP is bound at residue 32–37; sequence SGGQDS.

It belongs to the tRNA(Ile)-lysidine synthase family.

Its subcellular location is the cytoplasm. It carries out the reaction cytidine(34) in tRNA(Ile2) + L-lysine + ATP = lysidine(34) in tRNA(Ile2) + AMP + diphosphate + H(+). In terms of biological role, ligates lysine onto the cytidine present at position 34 of the AUA codon-specific tRNA(Ile) that contains the anticodon CAU, in an ATP-dependent manner. Cytidine is converted to lysidine, thus changing the amino acid specificity of the tRNA from methionine to isoleucine. This chain is tRNA(Ile)-lysidine synthase, found in Synechococcus sp. (strain JA-3-3Ab) (Cyanobacteria bacterium Yellowstone A-Prime).